A 429-amino-acid chain; its full sequence is Glucose-1-phosphate adenylyltransferase (429 aa).

Residues glycine 162, 177-178 (EK), and serine 209 each bind alpha-D-glucose 1-phosphate.

It belongs to the bacterial/plant glucose-1-phosphate adenylyltransferase family. As to quaternary structure, homotetramer.

The enzyme catalyses alpha-D-glucose 1-phosphate + ATP + H(+) = ADP-alpha-D-glucose + diphosphate. The protein operates within glycan biosynthesis; glycogen biosynthesis. Involved in the biosynthesis of ADP-glucose, a building block required for the elongation reactions to produce glycogen. Catalyzes the reaction between ATP and alpha-D-glucose 1-phosphate (G1P) to produce pyrophosphate and ADP-Glc. The sequence is that of Glucose-1-phosphate adenylyltransferase from Nostoc punctiforme (strain ATCC 29133 / PCC 73102).